The sequence spans 632 residues: tRNA uridine 5-carboxymethylaminomethyl modification enzyme MnmG (632 aa).

FAD contacts are provided by residues 15 to 20, isoleucine 127, and serine 182; that span reads GAGHAG. 276-290 serves as a coordination point for NAD(+); that stretch reads GPRYCPSIEDKIVRF. Glutamine 373 contacts FAD.

The protein belongs to the MnmG family. In terms of assembly, homodimer. Heterotetramer of two MnmE and two MnmG subunits. FAD is required as a cofactor.

Its subcellular location is the cytoplasm. Functionally, NAD-binding protein involved in the addition of a carboxymethylaminomethyl (cmnm) group at the wobble position (U34) of certain tRNAs, forming tRNA-cmnm(5)s(2)U34. In Streptococcus pyogenes serotype M12 (strain MGAS2096), this protein is tRNA uridine 5-carboxymethylaminomethyl modification enzyme MnmG.